Reading from the N-terminus, the 153-residue chain is 3-hydroxyacyl-[acyl-carrier-protein] dehydratase FabZ (153 aa).

Residue H54 is part of the active site.

It belongs to the thioester dehydratase family. FabZ subfamily.

Its subcellular location is the cytoplasm. The catalysed reaction is a (3R)-hydroxyacyl-[ACP] = a (2E)-enoyl-[ACP] + H2O. Its function is as follows. Involved in unsaturated fatty acids biosynthesis. Catalyzes the dehydration of short chain beta-hydroxyacyl-ACPs and long chain saturated and unsaturated beta-hydroxyacyl-ACPs. In Chlamydia trachomatis serovar L2 (strain ATCC VR-902B / DSM 19102 / 434/Bu), this protein is 3-hydroxyacyl-[acyl-carrier-protein] dehydratase FabZ.